The sequence spans 1373 residues: Capping protein, Arp2/3 and myosin-I linker protein 3 (1373 aa).

Residues 126–151 (RGNADTPEGPRDTSPNSETSTSTTHS) form a disordered region. Residues 138 to 151 (TSPNSETSTSTTHS) show a composition bias toward low complexity. 10 LRR repeats span residues 242 to 269 (SGSLEELVLDNAGLKTDFVQKLAGVFGE), 272 to 299 (SCVLHALTLSHNPIEDKGFLSLSQQLLC), 333 to 358 (ASSLRYLDLSKNPGLLATDEANALYS), 390 to 417 (CSHLTYLNLARNSCSHRKGREAPPAFKQ), 422 to 446 (AYTLSHVNLSATRLPLEALRALLQG), 453 to 475 (LSDLHLDLSSCELRSAGAQALQE), 480 to 507 (VTCIGSLDLSDNGFDSDLLTLVPALGKN), 510 to 536 (LKHLFLGKNFNVKAKTLEEILHKLVQL), 541 to 564 (DCSLQSLSVADSRLKLRTSILINA), and 568 to 591 (NTCLAKVDLSGNGMEDIGAKMLSK). Disordered regions lie at residues 864–902 (RTLSDPPGGAGPGQDPSSRGRGRSHDHEETDDELGTNID) and 970–1373 (LRHQ…PGTD). Pro residues predominate over residues 981–997 (PRTTPPGPGRPSVPVPG). The span at 1007–1022 (RLDEGLEDFFSRRVMD) shows a compositional bias: basic and acidic residues. The span at 1047 to 1062 (QKRRRRGLFHFRRPRS) shows a compositional bias: basic residues. The segment covering 1078–1097 (LPPPPPPPPTQESPPSPDPP) has biased composition (pro residues). Over residues 1098 to 1108 (SLGNNSSPCWS) the composition is skewed to low complexity. A compositionally biased stretch (basic and acidic residues) spans 1218–1228 (RRAEATWHIAE). Positions 1232 to 1243 (PNHSCQSPSPAS) are enriched in polar residues. A compositionally biased stretch (pro residues) spans 1269–1278 (PIGPRPPKPV). The segment covering 1345-1358 (QSCDKLEPDRRRPP) has biased composition (basic and acidic residues).

This sequence belongs to the CARMIL family. In terms of tissue distribution, widely expressed, with much higher levels in fetal tissues than in adult ones. Highly expressed in newborn brain.

The protein resides in the cytoplasm. It is found in the cell membrane. The chain is Capping protein, Arp2/3 and myosin-I linker protein 3 (Carmil3) from Rattus norvegicus (Rat).